Here is a 432-residue protein sequence, read N- to C-terminus: Enolase (432 aa).

A (2R)-2-phosphoglycerate-binding site is contributed by Gln-167. Glu-209 serves as the catalytic Proton donor. The Mg(2+) site is built by Asp-246, Glu-291, and Asp-318. Residues Lys-343, Arg-372, Ser-373, and Lys-394 each coordinate (2R)-2-phosphoglycerate. Lys-343 (proton acceptor) is an active-site residue.

Belongs to the enolase family. In terms of assembly, component of the RNA degradosome, a multiprotein complex involved in RNA processing and mRNA degradation. Mg(2+) is required as a cofactor.

The protein resides in the cytoplasm. It localises to the secreted. The protein localises to the cell surface. It carries out the reaction (2R)-2-phosphoglycerate = phosphoenolpyruvate + H2O. It participates in carbohydrate degradation; glycolysis; pyruvate from D-glyceraldehyde 3-phosphate: step 4/5. Functionally, catalyzes the reversible conversion of 2-phosphoglycerate (2-PG) into phosphoenolpyruvate (PEP). It is essential for the degradation of carbohydrates via glycolysis. This is Enolase from Aliivibrio fischeri (strain MJ11) (Vibrio fischeri).